Here is a 309-residue protein sequence, read N- to C-terminus: Protein FdhE homolog (309 aa).

Belongs to the FdhE family.

The protein localises to the cytoplasm. Its function is as follows. Necessary for formate dehydrogenase activity. The chain is Protein FdhE homolog from Pasteurella multocida (strain Pm70).